The chain runs to 405 residues: uncharacterized protein (405 aa).

Residues 1-34 (MNKFLKYFLILLALVLIVVPIVFATLLFKTSQDA) form the signal peptide. A compositionally biased stretch (basic and acidic residues) spans 348–359 (EQNDTTDKDKTS). The disordered stretch occupies residues 348–405 (EQNDTTDKDKTSNENSDSTNNSDSSNQQQPATDQNSNQNQGGTQQAPQASNNQNGVVN). 2 stretches are compositionally biased toward low complexity: residues 360–373 (NENS…DSSN) and 381–392 (QNSNQNQGGTQQ). Residues 393 to 405 (APQASNNQNGVVN) show a composition bias toward polar residues.

The protein belongs to the LytR/CpsA/Psr (LCP) family.

This is an uncharacterized protein from Staphylococcus aureus (strain NCTC 8325 / PS 47).